A 193-amino-acid polypeptide reads, in one-letter code: MNFLAHLHLAHLADSSLSGNLLADFVRGNPATHYPPDVVEGIYMHRRIDVMTDNLPEVREAREWFRHETRRVAPITLDVMWDHFLSRHWTQISPDFPLQAFVAYAHAQVATILPDSPPRFVNLNDYLWSEKWLERYRDMDFIQNVLNGMANRRPRLDALRDSWYDLDAHYDALEERFWHFYPRMMAQAARKAL.

The protein belongs to the AcpH family.

The catalysed reaction is holo-[ACP] + H2O = apo-[ACP] + (R)-4'-phosphopantetheine + H(+). In terms of biological role, converts holo-ACP to apo-ACP by hydrolytic cleavage of the phosphopantetheine prosthetic group from ACP. This Salmonella dublin (strain CT_02021853) protein is Acyl carrier protein phosphodiesterase.